The chain runs to 202 residues: LexA repressor (202 aa).

The H-T-H motif DNA-binding region spans 28–48; sequence RAEIAAQLGFRSPNAAEEHLK. Residues serine 119 and lysine 156 each act as for autocatalytic cleavage activity in the active site.

The protein belongs to the peptidase S24 family. In terms of assembly, homodimer.

The catalysed reaction is Hydrolysis of Ala-|-Gly bond in repressor LexA.. Functionally, represses a number of genes involved in the response to DNA damage (SOS response), including recA and lexA. Binds to the 16 bp palindromic sequence 5'-CTGTATATATATACAG-3'. In the presence of single-stranded DNA, RecA interacts with LexA causing an autocatalytic cleavage which disrupts the DNA-binding part of LexA, leading to derepression of the SOS regulon and eventually DNA repair. This Erwinia tasmaniensis (strain DSM 17950 / CFBP 7177 / CIP 109463 / NCPPB 4357 / Et1/99) protein is LexA repressor.